The primary structure comprises 426 residues: Bone morphogenetic protein 7 (426 aa).

Residues 1–22 (MNALTVKRRLPVLLFLFHISLS) form the signal peptide. The propeptide occupies 23-282 (SISSNTILEN…TSDIHLRSVR (260 aa)). 3 N-linked (GlcNAc...) asparagine glycosylation sites follow: Asn177, Asn307, and Asn367. Intrachain disulfides connect Cys325/Cys391, Cys354/Cys423, and Cys358/Cys425.

Belongs to the TGF-beta family. Homodimer; disulfide-linked. Interacts with twsg1.

It localises to the secreted. Growth factor of the TGF-beta superfamily that plays important role in various biological processes, including embryogenesis, hematopoiesis, neurogenesis and skeletal morphogenesis. Initiates the canonical BMP signaling cascade by associating with type I receptor ACVR1 and type II receptor ACVR2A. Once all three components are bound together in a complex at the cell surface, ACVR2A phosphorylates and activates ACVR1. In turn, ACVR1 propagates signal by phosphorylating SMAD1/5/8 that travel to the nucleus and act as activators and repressors of transcription of target genes. This Xenopus laevis (African clawed frog) protein is Bone morphogenetic protein 7 (bmp7).